We begin with the raw amino-acid sequence, 316 residues long: Long form salivary protein D7L1 (316 aa).

A signal peptide spans 1–23 (MSHTRAVVLAVACLCLILVQVEG). 4 cysteine pairs are disulfide-bonded: Cys-40–Cys-76, Cys-72–Cys-131, Cys-181–Cys-214, and Cys-255–Cys-266.

This sequence belongs to the PBP/GOBP family.

It is found in the secreted. In terms of biological role, modulates blood feeding of female mosquitoes on vertebrate species by binding and sequestering different mediators involved in the host response, such as biogenic amines and eicosanoids. Binds serotonin, tryptamine, histamine, leukotriene C4, leukotriene D4 and leukotriene E4. Does not bind octopamine, dopamine, noradrenaline, adrenaline and prostaglandin PGF2alpha. This chain is Long form salivary protein D7L1, found in Anopheles atroparvus (European mosquito).